A 799-amino-acid polypeptide reads, in one-letter code: MTSESPTNYDGIDSRIDTVADRVGSVWPLHSFVTANPLSGFEGSPFEDAVAEGERLFGGRGYPRADIFRRAWEDGRIDDDALRTELERRGIERDPETLLEAMETAETKRDDDPDDATAAVDRVLSKWLAAYLDQGQAPWPMPNREEGFYSAWRAVAPYDSDVPGCDDTEDVPATATGAVETVLDAYPRRRWDSIIEHHLAALPGWTGFIKQRADDEFDPWQSEYPITLTEYLGVRLTLVDLLDAPVAPETDADAGDETTAVREAWLSAWEQSYREHLLEDVDDDVTESSHGNGKRPAAQLVFCIDTRSEIIRRHIEQQGPYETHGYAGFFGVPMRHEAYGSDVTTEACPPIVEPEHIIADRPDAHHAEQETAHNRWHGLVSAARKHFKRLKTNPVAAFPFVEGAGSAYGSAMALRTLLPSAVYKLGSTVDEHVPSSHEFCSPTLDRPRMTHEEKVEYAQTAFELMGWTEFARLVVFTGHTSHTTNNPFDSSLQCGACAGNPGGPNARVLAKICNDEAVKDDLRERGVDIPDDTVFVGAEHNTTTDEITLFDGEVPKSHHADVAALRDSLEQARAGAAAERSEALNGADPDKGVSETASRAADWAQTRPEWGLAGNASFVIGPRELTADSDLDGRAFLHSYDWTTDPDGDALELIMLGPLVVTQWINNQYYFATVDNRVYGSGSKVTQNPVGNIGVVQGNGGDLMMGLPLQSLMSDDDSPYHQPLRLTAVIHASVENVTDILREHGHVRRLVDNGWVGNLTVVDPTRDNAAFDYVGGLEWEPSVQQDASSERVAAPAASD.

Residues C303, D305, H479, and C494 each coordinate Zn(2+). The interval 574–598 (AGAAAERSEALNGADPDKGVSETAS) is disordered.

It belongs to the inorganic carbon transporter (TC 9.A.2) DabA family. As to quaternary structure, forms a complex with DabB. Zn(2+) serves as cofactor.

It localises to the cell membrane. Functionally, part of an energy-coupled inorganic carbon pump. This is Probable inorganic carbon transporter subunit DabA from Natronomonas pharaonis (strain ATCC 35678 / DSM 2160 / CIP 103997 / JCM 8858 / NBRC 14720 / NCIMB 2260 / Gabara) (Halobacterium pharaonis).